The following is a 215-amino-acid chain: MEKFTVYKGLVAPLNRENVDTDAIIPKQFLKSIKKTGFGQNLFDEWRYLDHGEPGQDCSTRPINPDFVLNQPRYKGAGILLARKNFGCGSSREHAPWALDQFGFRAVIAPSFADIFYNNCFKNGVLPIVLTEMQVDHLFNETQAFNGYQLTIDLEGQKVITPDGTAYSFDVAPFRKHCLLYGLDDIGLTLQHADKIKAYEAERILKMPWLATQLP.

This sequence belongs to the LeuD family. LeuD type 1 subfamily. Heterodimer of LeuC and LeuD.

The catalysed reaction is (2R,3S)-3-isopropylmalate = (2S)-2-isopropylmalate. It participates in amino-acid biosynthesis; L-leucine biosynthesis; L-leucine from 3-methyl-2-oxobutanoate: step 2/4. Catalyzes the isomerization between 2-isopropylmalate and 3-isopropylmalate, via the formation of 2-isopropylmaleate. In Polynucleobacter asymbioticus (strain DSM 18221 / CIP 109841 / QLW-P1DMWA-1) (Polynucleobacter necessarius subsp. asymbioticus), this protein is 3-isopropylmalate dehydratase small subunit.